Consider the following 332-residue polypeptide: Phosphate acyltransferase (332 aa).

Belongs to the PlsX family. In terms of assembly, homodimer. Probably interacts with PlsY.

It is found in the cytoplasm. It carries out the reaction a fatty acyl-[ACP] + phosphate = an acyl phosphate + holo-[ACP]. It functions in the pathway lipid metabolism; phospholipid metabolism. Functionally, catalyzes the reversible formation of acyl-phosphate (acyl-PO(4)) from acyl-[acyl-carrier-protein] (acyl-ACP). This enzyme utilizes acyl-ACP as fatty acyl donor, but not acyl-CoA. In Streptococcus sanguinis (strain SK36), this protein is Phosphate acyltransferase.